Consider the following 421-residue polypeptide: UDP-N-acetylglucosamine 1-carboxyvinyltransferase (421 aa).

22-23 (KN) is a binding site for phosphoenolpyruvate. R94 provides a ligand contact to UDP-N-acetyl-alpha-D-glucosamine. C118 functions as the Proton donor in the catalytic mechanism. Position 118 is a 2-(S-cysteinyl)pyruvic acid O-phosphothioketal (C118). UDP-N-acetyl-alpha-D-glucosamine contacts are provided by residues 163-166 (KVSV), D308, and I330.

Belongs to the EPSP synthase family. MurA subfamily.

The protein resides in the cytoplasm. It carries out the reaction phosphoenolpyruvate + UDP-N-acetyl-alpha-D-glucosamine = UDP-N-acetyl-3-O-(1-carboxyvinyl)-alpha-D-glucosamine + phosphate. The protein operates within cell wall biogenesis; peptidoglycan biosynthesis. Its function is as follows. Cell wall formation. Adds enolpyruvyl to UDP-N-acetylglucosamine. This chain is UDP-N-acetylglucosamine 1-carboxyvinyltransferase, found in Orientia tsutsugamushi (strain Boryong) (Rickettsia tsutsugamushi).